The primary structure comprises 104 residues: Thioredoxin (104 aa).

The region spanning 2–104 is the Thioredoxin domain; sequence AIVKVTDSNF…NLAEVLDKHL (103 aa). A disulfide bond links Cys29 and Cys32.

The protein belongs to the thioredoxin family.

Component of the thioredoxin-thioredoxin reductase system. Participates in various redox reactions through the reversible oxidation of its active center dithiol to a disulfide and catalyzes dithiol-disulfide exchange reactions. This Staphylococcus haemolyticus (strain JCSC1435) protein is Thioredoxin (trxA).